The chain runs to 569 residues: Proline--tRNA ligase (569 aa).

It belongs to the class-II aminoacyl-tRNA synthetase family. ProS type 1 subfamily. As to quaternary structure, homodimer.

Its subcellular location is the cytoplasm. The catalysed reaction is tRNA(Pro) + L-proline + ATP = L-prolyl-tRNA(Pro) + AMP + diphosphate. Functionally, catalyzes the attachment of proline to tRNA(Pro) in a two-step reaction: proline is first activated by ATP to form Pro-AMP and then transferred to the acceptor end of tRNA(Pro). As ProRS can inadvertently accommodate and process non-cognate amino acids such as alanine and cysteine, to avoid such errors it has two additional distinct editing activities against alanine. One activity is designated as 'pretransfer' editing and involves the tRNA(Pro)-independent hydrolysis of activated Ala-AMP. The other activity is designated 'posttransfer' editing and involves deacylation of mischarged Ala-tRNA(Pro). The misacylated Cys-tRNA(Pro) is not edited by ProRS. In Nitrosospira multiformis (strain ATCC 25196 / NCIMB 11849 / C 71), this protein is Proline--tRNA ligase.